Consider the following 59-residue polypeptide: MRFRIRKCPNCGRYTLKEICPVCGAKTKVAHPPRFSPEDPYGEYRRRWKREVLGIEVRK.

The protein belongs to the NOP10 family.

Involved in ribosome biogenesis; more specifically in 18S rRNA pseudouridylation and in cleavage of pre-rRNA. The protein is Ribosome biogenesis protein Nop10 of Thermococcus gammatolerans (strain DSM 15229 / JCM 11827 / EJ3).